We begin with the raw amino-acid sequence, 53 residues long: Beta-defensin C7 (53 aa).

Disulfide bonds link C20/C49, C27/C42, and C32/C50.

It belongs to the beta-defensin family.

The protein localises to the secreted. In terms of biological role, has bactericidal activity. The polypeptide is Beta-defensin C7 (Bos taurus (Bovine)).